The following is an 867-amino-acid chain: Piwi-like protein 1 (867 aa).

Residues 1 to 11 (MTGRARARARG) are compositionally biased toward basic residues. A disordered region spans residues 1 to 70 (MTGRARARAR…QRGPQDAPKT (70 aa)). Residues 28-44 (AQKTLPSHPSEQRQSLQ) show a composition bias toward polar residues. A PAZ domain is found at 286–397 (TVLDFMYSLY…LIPELCYLTG (112 aa)). The tract at residues 324–326 (TYR) is required for binding 2'-O-methylated 3'-end of piRNAs. The segment at 485–621 (SRETRVAPLI…LQMNCKMGGE (137 aa)) is MID region. A Piwi domain is found at 561–853 (IVVCILSSTR…LAFLVGQSIH (293 aa)). Catalysis depends on residues Asp638, Glu676, Asp708, and His842.

It belongs to the argonaute family. Piwi subfamily. The cofactor is Mg(2+). Methylated on arginine residues; required for the interaction with Tudor domain-containing protein and subsequent localization to the meiotic nuage, also named P granule.

Its subcellular location is the cytoplasm. Functionally, endoribonuclease that plays a central role in postnatal germ cells by repressing transposable elements and preventing their mobilization, which is essential for the germline integrity. Acts via the piRNA metabolic process, which mediates the repression of transposable elements during meiosis by forming complexes composed of piRNAs and Piwi proteins and govern the methylation and subsequent repression of transposons. Directly binds methylated piRNAs, a class of 24 to 30 nucleotide RNAs that are generated by a Dicer-independent mechanism and are primarily derived from transposons and other repeated sequence elements. Strongly prefers a uridine in the first position of their guide (g1U preference, also named 1U-bias). Besides their function in transposable elements repression, piRNAs are probably involved in other processes during meiosis such as translation regulation. Not involved in the piRNA amplification loop, also named ping-pong amplification cycle. Acts as an endoribonuclease that cleaves transposon messenger RNAs. The polypeptide is Piwi-like protein 1 (PIWIL1) (Gallus gallus (Chicken)).